Consider the following 318-residue polypeptide: tRNA uridine(34) hydroxylase (318 aa).

The region spanning E123 to Q217 is the Rhodanese domain. Residue C177 is the Cysteine persulfide intermediate of the active site.

The protein belongs to the TrhO family.

The enzyme catalyses uridine(34) in tRNA + AH2 + O2 = 5-hydroxyuridine(34) in tRNA + A + H2O. Functionally, catalyzes oxygen-dependent 5-hydroxyuridine (ho5U) modification at position 34 in tRNAs. The polypeptide is tRNA uridine(34) hydroxylase (Staphylococcus aureus (strain bovine RF122 / ET3-1)).